The chain runs to 89 residues: MKYILYSRCSFSFSFISNHLTPDGPSKIGWLDKGFIISSSTLYFSMTSNVVCETTFPAGKHIPGAGDGNCFVYPSNFDVEKDCLMVFIE.

This is an uncharacterized protein from Vaccinia virus (strain Copenhagen) (VACV).